Reading from the N-terminus, the 557-residue chain is Urocanate hydratase (557 aa).

NAD(+)-binding positions include 53–54, Q131, 177–179, E197, R202, 243–244, 264–268, 274–275, and Y323; these read GG, GMG, NA, QTSAH, and YL. C411 is a catalytic residue. An NAD(+)-binding site is contributed by G493.

It belongs to the urocanase family. Requires NAD(+) as cofactor.

The protein resides in the cytoplasm. The enzyme catalyses 4-imidazolone-5-propanoate = trans-urocanate + H2O. The protein operates within amino-acid degradation; L-histidine degradation into L-glutamate; N-formimidoyl-L-glutamate from L-histidine: step 2/3. Its function is as follows. Catalyzes the conversion of urocanate to 4-imidazolone-5-propionate. The protein is Urocanate hydratase of Pseudomonas putida (strain ATCC 700007 / DSM 6899 / JCM 31910 / BCRC 17059 / LMG 24140 / F1).